We begin with the raw amino-acid sequence, 549 residues long: Alpha-amylase (549 aa).

A signal peptide spans 1–34 (MLTFHRIIRKGWMFLLAFLLTALLFCPTGQPAKA). Ca(2+) contacts are provided by D139, D196, A218, D220, D231, and D237. D196 is a Na(+) binding site. The Na(+) site is built by D220, D231, D237, and L238. D239 is a Ca(2+) binding site. The Nucleophile role is filled by D268. H272 contributes to the Ca(2+) binding site. E298 acts as the Proton donor in catalysis. Ca(2+) is bound by residues G337, F339, S440, D441, and D464.

The protein belongs to the glycosyl hydrolase 13 family. In terms of assembly, monomer. It depends on Ca(2+) as a cofactor. Requires Na(+) as cofactor.

The protein resides in the secreted. The enzyme catalyses Endohydrolysis of (1-&gt;4)-alpha-D-glucosidic linkages in polysaccharides containing three or more (1-&gt;4)-alpha-linked D-glucose units.. This Geobacillus stearothermophilus (Bacillus stearothermophilus) protein is Alpha-amylase (amyS).